The following is a 567-amino-acid chain: Hexose transporter HXT16 (567 aa).

Residues Met-1 to Ala-19 are compositionally biased toward polar residues. Residues Met-1–Trp-32 are disordered. Residues Met-1–Leu-55 are Cytoplasmic-facing. A helical membrane pass occupies residues Gly-56–Trp-76. Residues Asp-77 to Gly-112 are Extracellular-facing. The chain crosses the membrane as a helical span at residues Leu-113–Ala-133. The Cytoplasmic segment spans residues Asp-134–Arg-139. Residues Leu-140–Asn-160 traverse the membrane as a helical segment. The Extracellular portion of the chain corresponds to His-161–Lys-170. Residues Ile-171–Ile-191 traverse the membrane as a helical segment. Residues Ala-192–Arg-197 lie on the Cytoplasmic side of the membrane. The helical transmembrane segment at Gly-198–Ser-218 threads the bilayer. The Extracellular segment spans residues Val-219–Arg-232. The helical transmembrane segment at Ile-233 to Pro-253 threads the bilayer. At Glu-254–Glu-336 the chain is on the cytoplasmic side. Residues Asn-337–Thr-353 traverse the membrane as a helical segment. Topologically, residues Asp-354–Ser-359 are extracellular. The helical transmembrane segment at Ile-360–Val-377 threads the bilayer. Topologically, residues Asp-378–Lys-384 are cytoplasmic. A helical transmembrane segment spans residues Cys-385–Val-405. Topologically, residues Lys-406–Val-427 are extracellular. The chain crosses the membrane as a helical span at residues Phe-428–Val-448. Residues Ala-449–Thr-465 are Cytoplasmic-facing. Residues Ala-466–Ile-486 traverse the membrane as a helical segment. Residue His-487 is a topological domain, extracellular. Residues Phe-488 to Phe-508 traverse the membrane as a helical segment. The Cytoplasmic portion of the chain corresponds to Leu-509–Asn-567. A disordered region spans residues Ser-533 to Ser-555. Basic and acidic residues predominate over residues Ser-545–Ser-555.

This sequence belongs to the major facilitator superfamily. Sugar transporter (TC 2.A.1.1) family.

It localises to the membrane. Probable glucose transporter. The chain is Hexose transporter HXT16 (HXT16) from Saccharomyces cerevisiae (strain ATCC 204508 / S288c) (Baker's yeast).